Reading from the N-terminus, the 131-residue chain is Ribosome-binding factor A (131 aa).

It belongs to the RbfA family. Monomer. Binds 30S ribosomal subunits, but not 50S ribosomal subunits or 70S ribosomes.

It is found in the cytoplasm. In terms of biological role, one of several proteins that assist in the late maturation steps of the functional core of the 30S ribosomal subunit. Associates with free 30S ribosomal subunits (but not with 30S subunits that are part of 70S ribosomes or polysomes). Required for efficient processing of 16S rRNA. May interact with the 5'-terminal helix region of 16S rRNA. This chain is Ribosome-binding factor A, found in Thermotoga petrophila (strain ATCC BAA-488 / DSM 13995 / JCM 10881 / RKU-1).